Here is a 503-residue protein sequence, read N- to C-terminus: Inosine-5'-monophosphate dehydrogenase (503 aa).

2 residues coordinate K(+): glycine 20 and serine 22. 2 CBS domains span residues 103–163 (FVVS…ETKV) and 167–228 (MTPF…LVDS). 261–263 (DSS) is a binding site for NAD(+). K(+) is bound by residues aspartate 264, phenylalanine 266, glycine 314, and glycine 316. 312 to 314 (GIG) is an NAD(+) binding site. An IMP-binding site is contributed by serine 317. Cysteine 319 provides a ligand contact to K(+). Catalysis depends on cysteine 319, which acts as the Thioimidate intermediate. IMP contacts are provided by residues 358–360 (DGG), 381–382 (GR), and 405–409 (YWGEG). Arginine 418 functions as the Proton acceptor in the catalytic mechanism. Glutamate 431 contacts IMP. 4 residues coordinate K(+): asparagine 460, glutamate 485, glycine 486, and glycine 487.

It belongs to the IMPDH/GMPR family. Homotetramer. Requires K(+) as cofactor.

It localises to the cytoplasm. The enzyme catalyses IMP + NAD(+) + H2O = XMP + NADH + H(+). It functions in the pathway purine metabolism; XMP biosynthesis via de novo pathway; XMP from IMP: step 1/1. Mycophenolic acid (MPA) is a non-competitive inhibitor that prevents formation of the closed enzyme conformation by binding to the same site as the amobile flap. In contrast, mizoribine monophosphate (MZP) is a competitive inhibitor that induces the closed conformation. MPA is a potent inhibitor of mammalian IMPDHs but a poor inhibitor of the bacterial enzymes. MZP is a more potent inhibitor of bacterial IMPDH. Functionally, catalyzes the conversion of inosine 5'-phosphate (IMP) to xanthosine 5'-phosphate (XMP), the first committed and rate-limiting step in the de novo synthesis of guanine nucleotides, and therefore plays an important role in the regulation of cell growth. Could also have a single-stranded nucleic acid-binding activity and could play a role in RNA and/or DNA metabolism. This is Inosine-5'-monophosphate dehydrogenase from Tritrichomonas foetus (Trichomonas foetus).